We begin with the raw amino-acid sequence, 202 residues long: LexA repressor (202 aa).

The H-T-H motif DNA-binding region spans 28 to 48 (RAEIAQELGFKSPNAAEEHLK). Active-site for autocatalytic cleavage activity residues include Ser-123 and Lys-160.

This sequence belongs to the peptidase S24 family. Homodimer.

It catalyses the reaction Hydrolysis of Ala-|-Gly bond in repressor LexA.. In terms of biological role, represses a number of genes involved in the response to DNA damage (SOS response), including recA and lexA. In the presence of single-stranded DNA, RecA interacts with LexA causing an autocatalytic cleavage which disrupts the DNA-binding part of LexA, leading to derepression of the SOS regulon and eventually DNA repair. The polypeptide is LexA repressor (Pseudomonas putida (Arthrobacter siderocapsulatus)).